The chain runs to 313 residues: Fucose-specific lectin (313 aa).

6 consecutive repeat copies span residues 5-57 (FLYT…VIGE), 58-109 (AKLF…VGVK), 110-162 (VGSN…SFGS), 163-208 (TVPG…FSAS), 209-260 (ASAG…RPTP), and 261-304 (SLPD…IGAV). The segment at 5–304 (FLYTSKIAAI…SGKGWSIGAV (300 aa)) is 6 X approximate tandem repeats. The beta-L-fucose site is built by arginine 25, glutamate 37, arginine 78, glutamate 90, tryptophan 98, glutamine 102, arginine 132, glutamate 147, and tryptophan 154. Positions 78 and 90 each coordinate alpha-L-fucose. Position 102 (glutamine 102) interacts with alpha-L-fucose. Tryptophan 154, arginine 180, and glutamate 192 together coordinate alpha-L-fucose. Position 200 (tryptophan 200) interacts with beta-L-fucose. An alpha-L-fucose-binding site is contributed by glycine 204. Arginine 227 and glutamate 239 together coordinate beta-L-fucose. Tryptophan 246 lines the alpha-L-fucose pocket. Residue tryptophan 299 coordinates beta-L-fucose.

It belongs to the fungal fucose-specific lectin family. In terms of assembly, forms homodimers. The two AAL monomers are associated via interactions between N-terminal and C-terminal peptides. Tyr-7 interacts via aromatic ring stacking with its counterpart on the other monomer, whereas Ser-284 interacts via hydrogen bonding with Asp-264 on the other monomer.

Functionally, lectin that specifically binds to L-fucose. Has strongest preference for the alpha-1,6-fucosylated chain (core fucose) on glycoproteins among alpha-1,2-, alpha-1,3-, alpha-1,4-, and alpha-1,6-fucosylated chains. Might play a role in the differentiation of the fruiting body. Exhibits antifungal activity against Mucor racemosus and thus could act as an antifungal protein in natural ecosystems. This is Fucose-specific lectin from Aleuria aurantia (Orange peel mushroom).